Consider the following 329-residue polypeptide: 4-hydroxythreonine-4-phosphate dehydrogenase (329 aa).

Residues histidine 136 and threonine 137 each contribute to the substrate site. A divalent metal cation is bound by residues histidine 166, histidine 211, and histidine 266. Substrate-binding residues include lysine 274, asparagine 283, and arginine 292.

Belongs to the PdxA family. Homodimer. Requires Zn(2+) as cofactor. Mg(2+) is required as a cofactor. It depends on Co(2+) as a cofactor.

Its subcellular location is the cytoplasm. The enzyme catalyses 4-(phosphooxy)-L-threonine + NAD(+) = 3-amino-2-oxopropyl phosphate + CO2 + NADH. It functions in the pathway cofactor biosynthesis; pyridoxine 5'-phosphate biosynthesis; pyridoxine 5'-phosphate from D-erythrose 4-phosphate: step 4/5. Catalyzes the NAD(P)-dependent oxidation of 4-(phosphooxy)-L-threonine (HTP) into 2-amino-3-oxo-4-(phosphooxy)butyric acid which spontaneously decarboxylates to form 3-amino-2-oxopropyl phosphate (AHAP). In Pseudomonas putida (strain ATCC 47054 / DSM 6125 / CFBP 8728 / NCIMB 11950 / KT2440), this protein is 4-hydroxythreonine-4-phosphate dehydrogenase.